The sequence spans 147 residues: Interleukin-4 (147 aa).

An N-terminal signal peptide occupies residues 1–19; sequence MGLRPQLAAILLCLLACTG. N-linked (GlcNAc...) asparagine glycosylation is found at Asn-20, Asn-61, Asn-90, and Asn-117. Cystine bridges form between Cys-47–Cys-87 and Cys-69–Cys-114.

This sequence belongs to the IL-4/IL-13 family.

It is found in the secreted. Functionally, participates in at least several B-cell activation processes as well as of other cell types. It is a costimulator of DNA-synthesis. It induces the expression of class II MHC molecules on resting B-cells. It enhances both secretion and cell surface expression of IgE and IgG1. It also regulates the expression of the low affinity Fc receptor for IgE (CD23) on both lymphocytes and monocytes. Positively regulates IL31RA expression in macrophages. Stimulates autophagy in dendritic cells by interfering with mTORC1 signaling and through the induction of RUFY4. This is Interleukin-4 (IL4) from Mesocricetus auratus (Golden hamster).